A 377-amino-acid chain; its full sequence is Nitric oxide reductase FlRd-NAD(+) reductase (377 aa).

It belongs to the FAD-dependent oxidoreductase family. FAD serves as cofactor.

The protein resides in the cytoplasm. The enzyme catalyses 2 reduced [nitric oxide reductase rubredoxin domain] + NAD(+) + H(+) = 2 oxidized [nitric oxide reductase rubredoxin domain] + NADH. It functions in the pathway nitrogen metabolism; nitric oxide reduction. In terms of biological role, one of at least two accessory proteins for anaerobic nitric oxide (NO) reductase. Reduces the rubredoxin moiety of NO reductase. This is Nitric oxide reductase FlRd-NAD(+) reductase (norW) from Shigella boydii serotype 4 (strain Sb227).